The chain runs to 750 residues: Photosystem I P700 chlorophyll a apoprotein A1 (750 aa).

A run of 8 helical transmembrane segments spans residues Val70–Ala93, Leu156–His179, Leu195–Leu219, Ile291–Tyr309, Trp346–Tyr369, Leu385–Val411, Ala433–His455, and Phe531–Leu549. [4Fe-4S] cluster contacts are provided by Cys573 and Cys582. A run of 2 helical transmembrane segments spans residues His589–Trp610 and Leu664–Phe686. His675 is a binding site for chlorophyll a'. Residues Met683 and Tyr691 each coordinate chlorophyll a. Position 692 (Trp692) interacts with phylloquinone. The chain crosses the membrane as a helical span at residues Ala724–Ala744.

It belongs to the PsaA/PsaB family. As to quaternary structure, the PsaA/B heterodimer binds the P700 chlorophyll special pair and subsequent electron acceptors. PSI consists of a core antenna complex that captures photons, and an electron transfer chain that converts photonic excitation into a charge separation. The eukaryotic PSI reaction center is composed of at least 11 subunits. The cofactor is P700 is a chlorophyll a/chlorophyll a' dimer, A0 is one or more chlorophyll a, A1 is one or both phylloquinones and FX is a shared 4Fe-4S iron-sulfur center..

The protein localises to the plastid. The protein resides in the chloroplast thylakoid membrane. The catalysed reaction is reduced [plastocyanin] + hnu + oxidized [2Fe-2S]-[ferredoxin] = oxidized [plastocyanin] + reduced [2Fe-2S]-[ferredoxin]. Functionally, psaA and PsaB bind P700, the primary electron donor of photosystem I (PSI), as well as the electron acceptors A0, A1 and FX. PSI is a plastocyanin-ferredoxin oxidoreductase, converting photonic excitation into a charge separation, which transfers an electron from the donor P700 chlorophyll pair to the spectroscopically characterized acceptors A0, A1, FX, FA and FB in turn. Oxidized P700 is reduced on the lumenal side of the thylakoid membrane by plastocyanin. This is Photosystem I P700 chlorophyll a apoprotein A1 from Panax ginseng (Korean ginseng).